Consider the following 500-residue polypeptide: Aspartyl/glutamyl-tRNA(Asn/Gln) amidotransferase subunit B (500 aa).

This sequence belongs to the GatB/GatE family. GatB subfamily. As to quaternary structure, heterotrimer of A, B and C subunits.

The catalysed reaction is L-glutamyl-tRNA(Gln) + L-glutamine + ATP + H2O = L-glutaminyl-tRNA(Gln) + L-glutamate + ADP + phosphate + H(+). The enzyme catalyses L-aspartyl-tRNA(Asn) + L-glutamine + ATP + H2O = L-asparaginyl-tRNA(Asn) + L-glutamate + ADP + phosphate + 2 H(+). Allows the formation of correctly charged Asn-tRNA(Asn) or Gln-tRNA(Gln) through the transamidation of misacylated Asp-tRNA(Asn) or Glu-tRNA(Gln) in organisms which lack either or both of asparaginyl-tRNA or glutaminyl-tRNA synthetases. The reaction takes place in the presence of glutamine and ATP through an activated phospho-Asp-tRNA(Asn) or phospho-Glu-tRNA(Gln). This Clavibacter michiganensis subsp. michiganensis (strain NCPPB 382) protein is Aspartyl/glutamyl-tRNA(Asn/Gln) amidotransferase subunit B.